A 134-amino-acid chain; its full sequence is 16 kDa beta-galactoside-binding lectin (134 aa).

N-acetylmethionine is present on Met1. The region spanning 4–134 (GLVVTQLDVQ…DFKVKAIKFS (131 aa)) is the Galectin domain. 69-75 (WGEEDRK) provides a ligand contact to a beta-D-galactoside.

In terms of assembly, homodimer. Mainly in the liver (adult), mainly in the muscle (embryo).

Functionally, this protein binds beta-galactoside. Its physiological function is not yet known. It may be involved in the regulation of differentiation. In Gallus gallus (Chicken), this protein is 16 kDa beta-galactoside-binding lectin.